Consider the following 63-residue polypeptide: MPKSRTCSFCGGSIEPGTGLMYVLRNGQILWFCSSKCYKNFVKLRRKPDKLEWVRKVKKSLLD.

Positions 7, 10, 33, and 37 each coordinate Zn(2+). A C4-type zinc finger spans residues 7 to 37 (CSFCGGSIEPGTGLMYVLRNGQILWFCSSKC).

This sequence belongs to the eukaryotic ribosomal protein eL24 family. In terms of assembly, part of the 50S ribosomal subunit. Forms a cluster with proteins L3 and L14. Zn(2+) serves as cofactor.

In terms of biological role, binds to the 23S rRNA. This Aeropyrum pernix (strain ATCC 700893 / DSM 11879 / JCM 9820 / NBRC 100138 / K1) protein is Large ribosomal subunit protein eL24.